A 312-amino-acid polypeptide reads, in one-letter code: Olfactory receptor 2M7 (312 aa).

Over 1–25 (MAWENQTFNSDFLLLGIFNHSPTHT) the chain is Extracellular. N-linked (GlcNAc...) asparagine glycosylation is present at asparagine 5. Residues 26 to 49 (FLFFLVLAIFSVAFMGNSIMVLLI) traverse the membrane as a helical segment. Over 50-57 (YLDTQLHT) the chain is Cytoplasmic. A helical transmembrane segment spans residues 58 to 79 (PMYFLLSQLSLMDLMLICTTVP). The Extracellular portion of the chain corresponds to 80–100 (KMAFNYLSGSKSISMAGCATQ). A disulfide bond links cysteine 97 and cysteine 189. A helical transmembrane segment spans residues 101–120 (IFFYISLLGSECFLLAVMSY). The Cytoplasmic portion of the chain corresponds to 121–139 (DRYTAICHPLRYTNLMRPK). Residues 140 to 158 (ICGLMTAFSWILGSTDGII) form a helical membrane-spanning segment. The Extracellular portion of the chain corresponds to 159-195 (DAVATFSFSYCGSREIAHFCCDFPSLLILSCNDTSIF). The chain crosses the membrane as a helical span at residues 196-219 (EEVIFICCIVMLVFPVAIIITSYA). Residues 220 to 236 (RVILAVIHMGSGEGRRK) lie on the Cytoplasmic side of the membrane. Residues 237–259 (AFTTCSSHLMVVGMYYGAGLFMC) traverse the membrane as a helical segment. At 260-272 (IQPTSHHSPMQDK) the chain is on the extracellular side. The helical transmembrane segment at 273–292 (MVSVFYTIVTPMLNPLIYSL) threads the bilayer. Over 293–311 (RNKEVTRALMKILGKGKSG) the chain is Cytoplasmic.

Belongs to the G-protein coupled receptor 1 family.

It localises to the cell membrane. In terms of biological role, odorant receptor. The protein is Olfactory receptor 2M7 (OR2M7) of Homo sapiens (Human).